The chain runs to 474 residues: L-lactate permease (474 aa).

Transmembrane regions (helical) follow at residues 4 to 21, 28 to 48, 63 to 85, 105 to 127, 142 to 164, 177 to 199, 209 to 231, 238 to 255, 281 to 303, 324 to 346, and 387 to 409; these read AILA…LAVF, ACFI…HFSI, FWPI…ASGG, LILA…AVAI, AALI…LPVT, LSVI…LVSL, GVFG…VSNY, SIIG…FVNL, FILV…QLLA, WLTS…QGMS, and IAVS…IGTL.

It belongs to the lactate permease family.

It is found in the cell membrane. In terms of biological role, plays a role in L-lactate utilization. In Streptococcus iniae (Streptococcus shiloi), this protein is L-lactate permease (lctP).